The primary structure comprises 139 residues: Gastrula zinc finger protein XlCGF67.1 (139 aa).

5 C2H2-type zinc fingers span residues 6–28 (VSCP…KKVH), 33–55 (YSCS…LRTH), 61–83 (YSCS…KRIH), 89–111 (FSCQ…QKIH), and 117–139 (FSCS…SRIH).

The protein belongs to the krueppel C2H2-type zinc-finger protein family.

The protein resides in the nucleus. May be involved in transcriptional regulation. The protein is Gastrula zinc finger protein XlCGF67.1 of Xenopus laevis (African clawed frog).